Here is a 269-residue protein sequence, read N- to C-terminus: MNSLSNIDFSKLSLFESIIVASQAIREDFPSHSVLTELKNRIKEAESYISSENEPDRKLEKLLQLFYTQWNFGGASGVYKLSDTLWIDNVLKTRKGTAVSLGIIFLHIAQSLKLPLNPVVFPTQLILRADWINEKKWLINPFNGEILDQHTLEVWLKGNISPTAELYENDLYKSESITVIRKMLDTLKAALMEEKKMELALNVTNLLIKIDPNDPYEIRDRGLIYAQLECNHVALTDLIYFVEHCPEDPISEIIKIQIHSIEQKKTILH.

Belongs to the UPF0162 family.

This Buchnera aphidicola subsp. Acyrthosiphon pisum (strain APS) (Acyrthosiphon pisum symbiotic bacterium) protein is UPF0162 protein BU173.